Here is a 671-residue protein sequence, read N- to C-terminus: DNA ligase (671 aa).

NAD(+) is bound by residues 32 to 36, 81 to 82, and Glu-113; these read DAEYD and SL. Lys-115 acts as the N6-AMP-lysine intermediate in catalysis. Arg-136, Glu-173, Lys-290, and Lys-314 together coordinate NAD(+). The Zn(2+) site is built by Cys-408, Cys-411, Cys-426, and Cys-432. The region spanning 593 to 671 is the BRCT domain; that stretch reads EIDSPFAGKT…EAEMIRLLGA (79 aa).

Belongs to the NAD-dependent DNA ligase family. LigA subfamily. The cofactor is Mg(2+). It depends on Mn(2+) as a cofactor.

The catalysed reaction is NAD(+) + (deoxyribonucleotide)n-3'-hydroxyl + 5'-phospho-(deoxyribonucleotide)m = (deoxyribonucleotide)n+m + AMP + beta-nicotinamide D-nucleotide.. Functionally, DNA ligase that catalyzes the formation of phosphodiester linkages between 5'-phosphoryl and 3'-hydroxyl groups in double-stranded DNA using NAD as a coenzyme and as the energy source for the reaction. It is essential for DNA replication and repair of damaged DNA. The protein is DNA ligase of Salmonella newport (strain SL254).